We begin with the raw amino-acid sequence, 285 residues long: MLERLSLYARLVRIDKPIGTLLLLWPTLWAMWMAAGGPPAWGLFWIFVAGTFLMRSAGCAINDWADRDFDKHVKRTRERPLTAGKIAAWEALAVAAVLALVAFALVLPLNALTKWLAVVAAVVAGTYPFFKRFFAIPQAYLGIAFGFGIPMAFAAIQDQVPPVAWLMLLANVFWAVAYDTAYAMVDRDDDLLIGMKTSAITFGRFDVAAIMLCYAAFLALMAWAGVLLGLGWPYWVGLAAAAGCAGYHYTLIRDRDRMRCFAAFRHNNWLGACVFAGTAVAYAIR.

8 consecutive transmembrane segments (helical) span residues 28 to 48 (LWAM…WIFV), 86 to 106 (IAAW…FALV), 110 to 130 (NALT…YPFF), 133 to 153 (FFAI…PMAF), 165 to 185 (WLML…YAMV), 210 to 230 (IMLC…LLGL), 232 to 252 (WPYW…YTLI), and 262 to 284 (AAFR…AYAI).

It belongs to the UbiA prenyltransferase family. Requires Mg(2+) as cofactor.

It localises to the cell inner membrane. It catalyses the reaction all-trans-octaprenyl diphosphate + 4-hydroxybenzoate = 4-hydroxy-3-(all-trans-octaprenyl)benzoate + diphosphate. The protein operates within cofactor biosynthesis; ubiquinone biosynthesis. Its function is as follows. Catalyzes the prenylation of para-hydroxybenzoate (PHB) with an all-trans polyprenyl group. Mediates the second step in the final reaction sequence of ubiquinone-8 (UQ-8) biosynthesis, which is the condensation of the polyisoprenoid side chain with PHB, generating the first membrane-bound Q intermediate 3-octaprenyl-4-hydroxybenzoate. This Cupriavidus necator (strain ATCC 17699 / DSM 428 / KCTC 22496 / NCIMB 10442 / H16 / Stanier 337) (Ralstonia eutropha) protein is 4-hydroxybenzoate octaprenyltransferase.